Reading from the N-terminus, the 173-residue chain is Lens fiber membrane intrinsic protein (173 aa).

At 1 to 3 the chain is on the cytoplasmic side; the sequence is MYS. The chain crosses the membrane as a helical span at residues 4-24; the sequence is FMGGGLFCAWVGTILLVVATA. The Extracellular segment spans residues 25 to 66; it reads TDHWMQYRLSGSFAHQGLWRYCLGNKCFLQTESIAYWNATRA. C-linked (Man) tryptophan glycosylation is found at Trp-43 and Trp-61. Asn-62 carries N-linked (GlcNAc...) asparagine glycosylation. A helical membrane pass occupies residues 67 to 87; sequence FMILSALCATSGIIMGVLAFA. At 88–98 the chain is on the cytoplasmic side; that stretch reads QQSTFTRLSRP. A helical membrane pass occupies residues 99–119; the sequence is FSAGIMFFASTLFVLLALAIY. The Extracellular portion of the chain corresponds to 120–140; the sequence is TGVTVSFLGRRFGDWRFSWSY. The chain crosses the membrane as a helical span at residues 141–161; that stretch reads ILGWVALLMTFFAGIFYMCAY. Over 162 to 173 the chain is Cytoplasmic; sequence RMHECRRLSTPR. Ser-170 is subject to Phosphoserine. Thr-171 is modified (phosphothreonine).

It belongs to the PMP-22/EMP/MP20 family. In terms of assembly, seems to be associated with itself or another lens membrane component via disulfide bonds. Eye lens specific.

The protein resides in the membrane. Present in the thicker 16-17 nm junctions of mammalian lens fiber cells, where it may contribute to cell junctional organization. Acts as a receptor for calmodulin. May play an important role in both lens development and cataractogenesis. This chain is Lens fiber membrane intrinsic protein (Lim2), found in Rattus norvegicus (Rat).